Consider the following 146-residue polypeptide: Hemoglobin subunit beta (146 aa).

Valine 1 is subject to N-acetylvaline. The 145-residue stretch at 2 to 146 (HLTGEEKSAV…VANALAHKYH (145 aa)) folds into the Globin domain. Residue threonine 12 is modified to Phosphothreonine. The residue at position 44 (serine 44) is a Phosphoserine. An N6-acetyllysine modification is found at lysine 59. Histidine 63 is a binding site for heme b. Lysine 82 bears the N6-acetyllysine mark. Histidine 92 is a binding site for heme b. Residue cysteine 93 is modified to S-nitrosocysteine. Lysine 144 is subject to N6-acetyllysine.

Belongs to the globin family. In terms of assembly, heterotetramer of two alpha chains and two beta chains. As to expression, red blood cells.

Involved in oxygen transport from the lung to the various peripheral tissues. The sequence is that of Hemoglobin subunit beta (HBB) from Phoca vitulina (Harbor seal).